The primary structure comprises 165 residues: Phosphopantetheine adenylyltransferase (165 aa).

Serine 10 is a binding site for substrate. Residues 10-11 (SF) and histidine 18 contribute to the ATP site. Residues lysine 42, serine 79, and arginine 93 each coordinate substrate. Residues 94 to 96 (GLR), glutamate 104, and 129 to 135 (VRPITAT) contribute to the ATP site.

This sequence belongs to the bacterial CoaD family. As to quaternary structure, homohexamer. Requires Mg(2+) as cofactor.

Its subcellular location is the cytoplasm. It carries out the reaction (R)-4'-phosphopantetheine + ATP + H(+) = 3'-dephospho-CoA + diphosphate. Its pathway is cofactor biosynthesis; coenzyme A biosynthesis; CoA from (R)-pantothenate: step 4/5. Functionally, reversibly transfers an adenylyl group from ATP to 4'-phosphopantetheine, yielding dephospho-CoA (dPCoA) and pyrophosphate. The polypeptide is Phosphopantetheine adenylyltransferase (Bradyrhizobium diazoefficiens (strain JCM 10833 / BCRC 13528 / IAM 13628 / NBRC 14792 / USDA 110)).